A 572-amino-acid polypeptide reads, in one-letter code: Phosphoenolpyruvate-protein phosphotransferase (572 aa).

The active-site Tele-phosphohistidine intermediate is H190. Phosphoenolpyruvate is bound by residues R297 and R333. Mg(2+)-binding residues include E432 and D456. Residues 455–456 and R466 contribute to the phosphoenolpyruvate site; that span reads ND. C503 (proton donor) is an active-site residue.

This sequence belongs to the PEP-utilizing enzyme family. In terms of assembly, homodimer. The cofactor is Mg(2+).

The protein localises to the cytoplasm. The enzyme catalyses L-histidyl-[protein] + phosphoenolpyruvate = N(pros)-phospho-L-histidyl-[protein] + pyruvate. Functionally, general (non sugar-specific) component of the phosphoenolpyruvate-dependent sugar phosphotransferase system (sugar PTS). This major carbohydrate active-transport system catalyzes the phosphorylation of incoming sugar substrates concomitantly with their translocation across the cell membrane. Enzyme I transfers the phosphoryl group from phosphoenolpyruvate (PEP) to the phosphoryl carrier protein (HPr). The polypeptide is Phosphoenolpyruvate-protein phosphotransferase (ptsI) (Listeria monocytogenes serovar 1/2a (strain ATCC BAA-679 / EGD-e)).